The chain runs to 1466 residues: Collagen alpha-1(III) chain (1466 aa).

Positions 1 to 23 (MMSFVQKGSWLLLALLHPTIILA) are cleaved as a signal peptide. Residues 24-153 (QQEAVEGGCS…CPTGPQNYSP (130 aa)) constitute a propeptide, N-terminal propeptide. One can recognise a VWFC domain in the interval 30 to 89 (GGCSHLGQSYADRDVWKPEPCQICVCDSGSVLCDDIICDDQELDCPNPEIPFGECCAVCP). Residues 95–1194 (PTRPPNGQGP…GPPGPPGAPG (1100 aa)) are disordered. Low complexity predominate over residues 99–108 (PNGQGPQGPK). Residues 146-155 (TGPQNYSPQY) are compositionally biased toward polar residues. Residues 149 to 167 (QNYSPQYDSYDVKSGVAVG) form a nonhelical region (N-terminal) region. The tract at residues 168–1196 (GLAGYPGPAG…PGPPGAPGPC (1029 aa)) is triple-helical region. 17 positions are modified to 4-hydroxyproline: Pro173, Pro179, Pro182, Pro185, Pro191, Pro194, Pro197, Pro203, Pro206, Pro215, Pro218, Pro236, Pro239, Pro245, Pro248, Pro257, and Pro260. The segment covering 175–185 (PAGPPGPPGPP) has biased composition (pro residues). Over residues 187 to 199 (TSGHPGSPGSPGY) the composition is skewed to low complexity. Basic and acidic residues predominate over residues 229-241 (KDGESGRPGRPGE). The span at 251–260 (KGPAGIPGFP) shows a compositional bias: low complexity. Lys263 bears the 5-hydroxylysine; alternate mark. Lys263 is a glycosylation site (O-linked (Gal...) hydroxylysine; alternate). Basic and acidic residues predominate over residues 266–277 (RGFDGRNGEKGE). At Pro281 the chain carries 4-hydroxyproline. Lys284 is subject to 5-hydroxylysine. Residues Pro290, Pro296, Pro305, Pro311, Pro314, Pro332, Pro335, Pro338, Pro344, Pro347, Pro359, Pro365, Pro371, Pro383, Pro386, Pro392, Pro404, Pro407, Pro416, Pro425, Pro434, Pro443, Pro455, Pro458, Pro470, Pro473, Pro479, Pro488, Pro500, Pro512, Pro524, Pro530, Pro533, Pro539, Pro542, Pro545, Pro551, Pro554, Pro563, Pro566, Pro575, Pro581, Pro590, Pro599, Pro602, Pro608, Pro620, Pro635, Pro644, Pro650, Pro656, Pro659, Pro661, Pro668, Pro671, Pro680, Pro686, Pro692, Pro701, Pro703, Pro713, Pro716, Pro722, Pro728, Pro737, Pro746, Pro749, Pro755, Pro770, Pro776, Pro785, Pro788, Pro797, Pro806, Pro812, Pro815, Pro821, Pro830, Pro839, Pro845, and Pro854 each carry the 4-hydroxyproline modification. Positions 311–322 (PGLPGAAGARGN) are enriched in low complexity. Positions 355–380 (PAGSPGSNGAPGQRGEPGPQGHAGAQ) are enriched in low complexity. Residues 390–399 (GSPGGKGEMG) show a composition bias toward gly residues. A compositionally biased stretch (low complexity) spans 404–425 (PGAPGLMGARGPPGPAGANGAP). Residues 426 to 435 (GLRGGAGEPG) are compositionally biased toward gly residues. Residues 478 to 523 (LPGAAGERGAPGFRGPAGPNGIPGEKGPAGERGAPGPAGPRGAAGE) show a composition bias toward low complexity. Gly residues predominate over residues 528-549 (GVPGGPGMRGMPGSPGGPGSDG). A compositionally biased stretch (gly residues) spans 642–651 (GLPGTGGPPG). Residues 669–678 (GAPGGKGDAG) are compositionally biased toward gly residues. Positions 679 to 692 (APGERGPPGLAGAP) are enriched in low complexity. The span at 693–711 (GLRGGAGPPGPEGGKGAAG) shows a compositional bias: gly residues. Residues 729–738 (GERGGLGSPG) show a composition bias toward gly residues. Low complexity predominate over residues 787–796 (LPGIAGPRGS). The segment covering 823–835 (GKGERGAPGEKGE) has biased composition (basic and acidic residues). Gly residues predominate over residues 836 to 850 (GGPPGVAGPPGGSGP). Lys860 is subject to 5-hydroxylysine. Residues 864 to 873 (GSPGGPGAAG) show a composition bias toward gly residues. A 4-hydroxyproline mark is found at Pro866, Pro869, Pro875, Pro881, Pro884, Pro890, Pro892, Pro899, Pro905, Pro914, Pro917, Pro929, Pro935, Pro941, and Pro944. The segment covering 890 to 907 (PGPPGPSGSPGKDGPPGP) has biased composition (pro residues). The span at 908-917 (AGNTGAPGSP) shows a compositional bias: low complexity. Low complexity predominate over residues 946–961 (PLGIAGITGARGLAGP). Pro962, Pro965, and Pro971 each carry 4-hydroxyproline. Lys977 carries the post-translational modification 5-hydroxylysine. Pro983, Pro995, Pro1001, Pro1010, Pro1016, Pro1022, Pro1028, Pro1040, Pro1043, Pro1046, Pro1049, Pro1052, Pro1076, and Pro1085 each carry 4-hydroxyproline. Positions 1046 to 1055 (PGHPGPPGPV) are enriched in pro residues. A compositionally biased stretch (low complexity) spans 1067 to 1085 (SGPAGPAGAPGPAGSRGAP). Lys1106 is modified (5-hydroxylysine). A 4-hydroxyproline mark is found at Pro1112, Pro1115, Pro1118, Pro1121, Pro1133, Pro1148, Pro1157, Pro1163, Pro1178, Pro1181, Pro1184, Pro1187, Pro1190, and Pro1193. Residues 1123–1133 (PAGQQGAIGSP) show a composition bias toward low complexity. Positions 1181–1193 (PGQPGPPGPPGAP) are enriched in pro residues. Residues 1197–1205 (CGGVGAAAI) are nonhelical region (C-terminal). Residues 1222–1466 (DEPMDFKINT…GVDVGPVCFL (245 aa)) constitute a propeptide, C-terminal propeptide. The Fibrillar collagen NC1 domain maps to 1232–1466 (DEIMTSLKSV…GVDVGPVCFL (235 aa)). Intrachain disulfides connect Cys1262-Cys1294, Cys1302-Cys1464, and Cys1372-Cys1417. Asp1280, Asn1282, Gln1283, Cys1285, and Asp1288 together coordinate Ca(2+).

The protein belongs to the fibrillar collagen family. Trimers of identical alpha 1(III) chains. The chains are linked to each other by interchain disulfide bonds. Trimers are also cross-linked via hydroxylysines. Interacts with ADGRG1. Post-translationally, proline residues at the third position of the tripeptide repeating unit (G-X-Y) are hydroxylated in some or all of the chains. O-linked glycan consists of a Glc-Gal disaccharide bound to the oxygen atom of a post-translationally added hydroxyl group.

Its subcellular location is the secreted. It is found in the extracellular space. The protein resides in the extracellular matrix. Its function is as follows. Collagen type III occurs in most soft connective tissues along with type I collagen. Involved in regulation of cortical development. Is the major ligand of ADGRG1 in the developing brain and binding to ADGRG1 inhibits neuronal migration and activates the RhoA pathway by coupling ADGRG1 to GNA13 and possibly GNA12. This chain is Collagen alpha-1(III) chain (COL3A1), found in Homo sapiens (Human).